Reading from the N-terminus, the 208-residue chain is MMGYQTNSNFSMFFSSENDDQNHHNYDPYNNFSSSTSVDCTLSLGTPSTRLDDHHRFSSANSNNISGDFYIHGGNAKTSSYKKGGVAHSLPRRCASCDTTSTPLWRNGPKGPKSLCNACGIRFKKEERRATARNLTISGGGSSAAEVPVENSYNGGGNYYSHHHHHYASSSPSWAHQNTQRVPYFSPVPEMEYPYVDNVTASSFMSWN.

The GATA-type zinc finger occupies 94–119 (CASCDTTSTPLWRNGPKGPKSLCNAC).

This sequence belongs to the type IV zinc-finger family. Class B subfamily.

The protein localises to the nucleus. Functionally, transcriptional regulator that specifically binds 5'-GATA-3' or 5'-GAT-3' motifs within gene promoters. In Arabidopsis thaliana (Mouse-ear cress), this protein is GATA transcription factor 20.